The primary structure comprises 505 residues: Flagellin (505 aa).

The protein belongs to the bacterial flagellin family.

The protein resides in the secreted. It localises to the bacterial flagellum. Flagellin is the subunit protein which polymerizes to form the filaments of bacterial flagella. The sequence is that of Flagellin (fliC) from Salmonella senftenberg.